The sequence spans 351 residues: Phenoloxidase-activating factor 3 (351 aa).

The first 19 residues, 1-19, serve as a signal peptide directing secretion; sequence MWLSLVILGVASAIVNVST. N-linked (GlcNAc...) asparagine glycosylation occurs at Asn-16. The 52-residue stretch at 22–73 folds into the Clip domain; it reads SCTTPNGETATCLPIESCKIFWDYVVTSGADPEINSFLRASLCRQGNYVVCC. 8 disulfide bridges follow: Cys-23-Cys-72, Cys-33-Cys-64, Cys-39-Cys-73, Cys-89-Cys-224, Cys-127-Cys-143, Cys-167-Cys-176, Cys-268-Cys-285, and Cys-295-Cys-326. The Peptidase S1 domain maps to 97-350; that stretch reads VLGGEDTDLG…HLDWIKQNVR (254 aa). His-142 acts as the Charge relay system in catalysis. 4 residues coordinate Ca(2+): Glu-158, Asp-160, Ala-163, and Asp-166. The Charge relay system role is filled by Asp-204. Ser-299 serves as the catalytic Charge relay system.

It belongs to the peptidase S1 family. CLIP subfamily. In terms of assembly, in the active form, heterodimer of a light chain and a heavy chain; disulfide-linked. In terms of processing, proteolytically cleaved.

Its subcellular location is the secreted. With respect to regulation, cleavage of PPAF2 is Ca(2+)-independent. Inhibited by heparin. Serine endopeptidase which, by cleaving prophenoloxidase activating factor PPAF2, is required for the activation of the prophenoloxidase cascade probably following the recognition of pathogen-derived products. The chain is Phenoloxidase-activating factor 3 from Holotrichia diomphalia (Korean black chafer).